Consider the following 175-residue polypeptide: VQ motif-containing protein 25 (175 aa).

The short motif at 50 to 59 (FRELVQSLTG) is the VQ element.

It is found in the nucleus. In terms of biological role, may function as negative regulator of plant defense. The polypeptide is VQ motif-containing protein 25 (Arabidopsis thaliana (Mouse-ear cress)).